We begin with the raw amino-acid sequence, 103 residues long: Putative membrane protein insertion efficiency factor (103 aa).

The interval 68-103 is disordered; that stretch reads HEGGYDPVPLAKQDAKPENNSESESLLNQPTETKSL. Polar residues predominate over residues 87 to 103; the sequence is NSESESLLNQPTETKSL.

Belongs to the UPF0161 family.

It localises to the cell inner membrane. Could be involved in insertion of integral membrane proteins into the membrane. In Idiomarina loihiensis (strain ATCC BAA-735 / DSM 15497 / L2-TR), this protein is Putative membrane protein insertion efficiency factor.